The following is a 113-amino-acid chain: Small ribosomal subunit protein bS6 (113 aa).

It belongs to the bacterial ribosomal protein bS6 family.

Functionally, binds together with bS18 to 16S ribosomal RNA. The sequence is that of Small ribosomal subunit protein bS6 from Pseudoalteromonas translucida (strain TAC 125).